The primary structure comprises 61 residues: Temporin-MT3 (61 aa).

The N-terminal stretch at 1–22 (MFTLKKPLLLLFFLGTINLSLC) is a signal peptide. A propeptide spans 23-44 (EQERNAEEERRDEPDERNAEVE) (removed in mature form). Leucine 59 bears the Leucine amide mark.

The protein belongs to the frog skin active peptide (FSAP) family. Temporin subfamily. In terms of tissue distribution, expressed by the skin glands.

It is found in the secreted. Its function is as follows. Antimicrobial peptide. The sequence is that of Temporin-MT3 from Amolops mantzorum (Sichuan torrent frog).